Consider the following 388-residue polypeptide: Outer membrane protein assembly factor BamB (388 aa).

An N-terminal signal peptide occupies residues 1–17 (MVLSLLSVMLLSGYKFL).

The protein belongs to the BamB family. In terms of assembly, part of the Bam complex, which is composed of the outer membrane protein BamA, and four lipoproteins BamB, BamC, BamD and BamE.

The protein localises to the cell outer membrane. In terms of biological role, part of the outer membrane protein assembly complex, which is involved in assembly and insertion of beta-barrel proteins into the outer membrane. The protein is Outer membrane protein assembly factor BamB of Moranella endobia (strain PCIT).